Reading from the N-terminus, the 355-residue chain is Protein RecA (355 aa).

65 to 72 contributes to the ATP binding site; the sequence is GPESSGKT.

It belongs to the RecA family.

It localises to the cytoplasm. Functionally, can catalyze the hydrolysis of ATP in the presence of single-stranded DNA, the ATP-dependent uptake of single-stranded DNA by duplex DNA, and the ATP-dependent hybridization of homologous single-stranded DNAs. It interacts with LexA causing its activation and leading to its autocatalytic cleavage. The polypeptide is Protein RecA (Pseudomonas putida (strain GB-1)).